A 116-amino-acid polypeptide reads, in one-letter code: Iron-sulfur cluster insertion protein ErpA (116 aa).

Iron-sulfur cluster contacts are provided by cysteine 44, cysteine 108, and cysteine 110.

The protein belongs to the HesB/IscA family. In terms of assembly, homodimer. Iron-sulfur cluster serves as cofactor.

Its function is as follows. Required for insertion of 4Fe-4S clusters for at least IspG. The protein is Iron-sulfur cluster insertion protein ErpA of Shewanella baltica (strain OS223).